We begin with the raw amino-acid sequence, 187 residues long: Rusticyanin (187 aa).

The N-terminal stretch at 1–32 (MYTQNTMKKNWYVTVGAAAALAATVGMGTAMA) is a signal peptide. The Plastocyanin-like domain maps to 85–187 (SFEVHDKKNP…TGMFGKIIVK (103 aa)). Cu cation-binding residues include H117, C170, H175, and M180.

In terms of assembly, monomer. Requires Cu cation as cofactor.

Its subcellular location is the periplasm. Electron carrier from cytochrome c552 to the A-type oxidase. In Acidithiobacillus ferridurans, this protein is Rusticyanin (rus).